The following is a 394-amino-acid chain: Elongation factor Tu 2 (394 aa).

Positions 10–204 constitute a tr-type G domain; that stretch reads KPHVNVGTIG…ALDSYIPEPE (195 aa). The tract at residues 19–26 is G1; the sequence is GHVDHGKT. Residue 19–26 participates in GTP binding; that stretch reads GHVDHGKT. Residue T26 coordinates Mg(2+). The interval 60–64 is G2; that stretch reads GITIN. Residues 81–84 form a G3 region; that stretch reads DCPG. Residues 81–85 and 136–139 each bind GTP; these read DCPGH and NKCD. A G4 region spans residues 136–139; the sequence is NKCD. The interval 174 to 176 is G5; the sequence is SAL.

It belongs to the TRAFAC class translation factor GTPase superfamily. Classic translation factor GTPase family. EF-Tu/EF-1A subfamily. In terms of assembly, monomer.

It localises to the cytoplasm. The catalysed reaction is GTP + H2O = GDP + phosphate + H(+). Functionally, GTP hydrolase that promotes the GTP-dependent binding of aminoacyl-tRNA to the A-site of ribosomes during protein biosynthesis. The protein is Elongation factor Tu 2 of Shewanella sp. (strain MR-4).